We begin with the raw amino-acid sequence, 513 residues long: NADH-quinone oxidoreductase chain 13 (513 aa).

A run of 14 helical transmembrane segments spans residues 3-23, 34-54, 81-101, 112-132, 133-153, 164-184, 211-231, 250-270, 277-297, 312-332, 340-360, 383-403, 418-438, and 463-483; these read NLLSIITFLPIVAAIIMALFL, AKWLALLTTTATFVISLFVLF, VDGISVLFVLLTTFMMPLTIL, EYMIAFLVLEGLMIGVFTALD, LVLFYLFFEAGLIPMFLIIGI, FKFFLYTFLGSVLMLVAMIAM, MTVVGGMQMLLFLAFFASFAV, PTAGSVLLAAVLLKMGGYGFL, FPVASGVAQPYVFWLSAIAIV, VIAYSSVAHMGYVTMGVFAAN, IFQMLSHGFISGALFLCVGVI, AAVFMFFTMANVGLPGTSGFV, WVALVATSGVILSAAYALWLY, and WVFIPLIAMTLILGVYPRLVT.

It belongs to the complex I subunit 4 family. NDH-1 is composed of at least 14 different subunits, Nqo1 to Nqo14. The complex has a L-shaped structure, with the hydrophobic arm (subunits Nqo7, Nqo8, Nqo10 to Nqo14) embedded in the inner membrane and the hydrophilic peripheral arm (subunits Nqo1 to Nqo6, Nqo9) protruding into the bacterial cytoplasm. The hydrophilic domain contains all the redox centers.

It localises to the cell inner membrane. It carries out the reaction a quinone + NADH + 5 H(+)(in) = a quinol + NAD(+) + 4 H(+)(out). NDH-1 shuttles electrons from NADH, via FMN and iron-sulfur (Fe-S) centers, to quinones in the respiratory chain. The immediate electron acceptor for the enzyme in this species is believed to be ubiquinone. Couples the redox reaction to proton translocation (for every two electrons transferred, four hydrogen ions are translocated across the cytoplasmic membrane), and thus conserves the redox energy in a proton gradient. The polypeptide is NADH-quinone oxidoreductase chain 13 (Paracoccus denitrificans).